A 753-amino-acid chain; its full sequence is MGPLLYRSRHIPAEEAQETGCFTTLPIRIHLRDDLADAASRRFVSDWAREMGDGREKKTYFSFSPVGNWSSLIYPEAIPERLGVLAYLSDLGLIHDDTGEGLSIEEAQAEHDELHAALDPDDKSSLDPDSRAMKTKKLVSQCMLECINLDHELGLNMLAAFRDVWLAISEKNSDKEAQTLEEYLQYRSDNGGMLVFWPMLQFSLGISLSEAEHELVQPIIDAATEGLLLANDYFSWERELREVQSGQSKRIVSAVELFARTMGLSVEDAKEAVKSRIIKSESDFCQRRDDLYKAQPNISSKLRRWIDCAGLAVSGNHYWCSACPRQNAWKNDTLSNGQNGHGLYRIHDGNGFKTVPMTNKTATDLQSNDIKILSNGNGGNAILNGNGAKTVVNGNGAKRKLSQYRMASPEQEPFVQKKRSMDTDTSCQKHDIQTVSQYPHHKPSNLAMDAPAAYISGMPSKGVRAALIDALNTWLHVPSAAIKTITSVVNLLHNASLILDDLEDNSPLRRGLPSAHVIFGQAQSINSANFMFVRAVQEVAQSLSPAALTAVLEELEGLYLGQSWDLYWKFNLACPTEAEYVNMIDHKTGGMFRMLLRVMQAESTATETPGLDFERLILLFGRFFQIRDDYMNFGDYAAQKGLCEDLDEGKFSYPIVYCLANHPEYRGHILGVFRQRPTVATTTASPLSTESKAHLVSCLRKCGAFEKTLSCLRDVERELELEIDRLERLTGEANPMLRLCLAKLSTKGIATLG.

The interval 1 to 329 (MGPLLYRSRH…CSACPRQNAW (329 aa)) is terpene cyclase. D96 contacts Mg(2+). The DDXXD 1 signature appears at 96-100 (DDTGE). The short motif at 231 to 239 (NDYFSWERE) is the NSE/DTE element. The tract at residues 330 to 745 (KNDTLSNGQN…MLRLCLAKLS (416 aa)) is prenyltransferase. The isopentenyl diphosphate site is built by K461, R464, and H493. D500 and D504 together coordinate Mg(2+). Positions 500 to 504 (DDLED) match the DDXXD 2 motif. R509 contacts dimethylallyl diphosphate. An isopentenyl diphosphate-binding site is contributed by R510. Positions 587, 588, 625, 632, 640, and 650 each coordinate dimethylallyl diphosphate.

This sequence in the N-terminal section; belongs to the terpene synthase family. It in the C-terminal section; belongs to the FPP/GGPP synthase family. Hexamer. Mg(2+) is required as a cofactor.

It carries out the reaction isopentenyl diphosphate + (2E,6E)-farnesyl diphosphate = (2E,6E,10E)-geranylgeranyl diphosphate + diphosphate. The protein operates within secondary metabolite biosynthesis; terpenoid biosynthesis. Bifunctional terpene synthase; part of the gene cluster that mediates the biosynthesis of the mycotoxin fusaproliferin (FUP) that belongs to the class of bicyclic sesterterpenoids. The FUP biosynthetic pathway starts with the enzyme encoded by FUP1 that combines a C-terminal prenyltransferase domain responsible for the synthesis of geranylgeranyl diphosphate with the N-terminal terpene cyclase domain, to yield preterpestacin I. Preterpestacin I is then decorated by oxygenation steps that are catalyzed by two cytochrome P450 monooxygenases. First, FUP2 introduces a hydroxyl group at the C-24 position resulting in the formation of preterpestacin IIa, which can be further oxidized. The second P450 monooxygenase catalyzes the hydroxylation at C-16 and C-17 of preterpestacin IIa, producing preterpestacin III. Subsequently, the FAD-dependent oxidoreductase FUP4 catalyzes the oxidation of the hydroxy group at the C-16 position to a keto group, leading to the formation of (-)-terpestacin, which is the immediate precursor of FUP. The final step in the proposed biosynthetic pathway is the addition of an acetyl group at the C-24 position of terpestacin, which is catalyzed by the acetyltransferase FUP5. The sequence is that of Bifunctional terpene synthase FUP1 from Fusarium proliferatum (strain ET1) (Orchid endophyte fungus).